A 317-amino-acid polypeptide reads, in one-letter code: Ventral anterior homeobox 1 (317 aa).

The disordered stretch occupies residues 1–62 (MEVRYSQDSE…CEKSRASSGD (62 aa)). Over residues 18–27 (GLKEGKEGKD) the composition is skewed to basic and acidic residues. A DNA-binding region (homeobox) is located at residues 92–151 (PKRTRTSFTAEQLYRLEMEFQRCQYVVGRERTELARQLNLSETQVKVWFQNRRTKQKKDQ). The tract at residues 203–248 (GPSLGITANGGSSSSSRSSAGSSGTAGGSPPLPTVTSSGTVTGLQG) is disordered. Low complexity predominate over residues 212–225 (GGSSSSSRSSAGSS). The span at 236-247 (TVTSSGTVTGLQ) shows a compositional bias: polar residues.

It belongs to the EMX homeobox family. In terms of tissue distribution, expressed in the anterior neural keel and later in the preoptic area and optic stalk.

Its subcellular location is the nucleus. Its function is as follows. Transcription factor that is required for closure of the choroid fissure and together with Vax2 is required for optic nerve differentiation and to limit retinal development to the optic cup. In Danio rerio (Zebrafish), this protein is Ventral anterior homeobox 1 (vax1).